A 243-amino-acid polypeptide reads, in one-letter code: Venom nerve growth factor 2 (243 aa).

The N-terminal stretch at 1–18 (MSMLCYTLIIAFLIGIWA) is a signal peptide. A propeptide spanning residues 19–125 (APKSEDNVPL…TLNRNIRAKR (107 aa)) is cleaved from the precursor. The segment covering 47 to 66 (GLKTSRNTDQRHPAPKKAED) has biased composition (basic and acidic residues). The segment at 47 to 67 (GLKTSRNTDQRHPAPKKAEDQ) is disordered. Cystine bridges form between C139-C204 and C192-C234. N148 is a glycosylation site (N-linked (GlcNAc...) asparagine).

The protein belongs to the NGF-beta family. In terms of assembly, homodimer; non-covalently linked. As to expression, expressed by the venom gland.

The protein localises to the secreted. Nerve growth factor is important for the development and maintenance of the sympathetic and sensory nervous systems. It stimulates division and differentiation of sympathetic and embryonic sensory neurons as well as basal forebrain cholinergic neurons in the brain. Its relevance in the snake venom is not clear. However, it has been shown to inhibit metalloproteinase-dependent proteolysis of platelet glycoprotein Ib alpha, suggesting a metalloproteinase inhibition to prevent metalloprotease autodigestion and/or protection against prey proteases. Binds a lipid between the two protein chains in the homodimer. The lipid-bound form promotes histamine relase from mouse mast cells, contrary to the lipid-free form. This chain is Venom nerve growth factor 2, found in Pseudonaja textilis (Eastern brown snake).